The primary structure comprises 25 residues: MIINNNISALNANRQLNLTGNSMTK.

The protein belongs to the bacterial flagellin family. The flagellum consists of an outer layer composed of two sheath proteins, flaA1 (44 kDa) and flaA2 (35 kDa) around a core that contains three proteins flaB1 (37 kDa), flaB2 (34 kDa) and flaB3 (32 kDa).

The protein resides in the periplasmic flagellum. Its subcellular location is the periplasm. Functionally, component of the core of the flagella. The protein is Flagellar filament core protein flaB3 (flaB3) of Brachyspira hyodysenteriae (Treponema hyodysenteriae).